The chain runs to 385 residues: Odorant receptor 47a (385 aa).

The Cytoplasmic segment spans residues 1–33 (MDSFLQVQKSTIALLGFDLFSENREMWKRPYRA). A helical transmembrane segment spans residues 34 to 54 (MNVFSIAAIFPFILAAVLHNW). The Extracellular segment spans residues 55–62 (KNVLLLAD). The helical transmembrane segment at 63–83 (AMVALLITILGLFKFSMILYL) threads the bilayer. Residues 84–129 (RRDFKRLIDKFRLLMSNEAEQGEEYAEILNAANKQDQRMCTLFRTC) are Cytoplasmic-facing. Residues 130-150 (FLLAWALNSVLPLVRMGLSYW) traverse the membrane as a helical segment. The Extracellular portion of the chain corresponds to 151–175 (LAGHAEPELPFPCLFPWNIHIIRNY). Residues 176 to 196 (VLSFIWSAFASTGVVLPAVSL) traverse the membrane as a helical segment. Residues 197–255 (DTIFCSFTSNLCAFFKIAQYKVVRFKGGSLKESQATLNKVFALYQTSLDMCNDLNQCYQ) lie on the Cytoplasmic side of the membrane. A helical transmembrane segment spans residues 256 to 276 (PIICAQFFISSLQLCMLGYLF). Over 277 to 284 (SITFAQTE) the chain is Extracellular. Residues 285–305 (GVYYASFIATIIIQAYIYCYC) traverse the membrane as a helical segment. Topologically, residues 306-357 (GENLKTESASFEWAIYDSPWHESLGAGGASTSICRSLLISMMRAHRGFRITG) are cytoplasmic. The chain crosses the membrane as a helical span at residues 358 to 378 (YFFEANMEAFSSIVRTAMSYI). The Extracellular portion of the chain corresponds to 379–385 (TMLRSFS).

This sequence belongs to the insect chemoreceptor superfamily. Heteromeric odorant receptor channel (TC 1.A.69) family. Or1a subfamily. Interacts with Orco. Complexes exist early in the endomembrane system in olfactory sensory neurons (OSNs), coupling these complexes to the conserved ciliary trafficking pathway. Expressed with Orco in 40 olfactory receptor neurons in a broad area across the antenna, including both anterior and posterior faces. This expression pattern matches the distribution of the small sensilla basiconica. Expression in the antenna is observed late in antennal development at 93 hours APF.

The protein localises to the cell membrane. In terms of biological role, odorant receptor which mediates acceptance or avoidance behavior, depending on its substrates. The odorant receptor repertoire encodes a large collection of odor stimuli that vary widely in identity, intensity, and duration. Complexes with Orco to form odorant-sensing units, providing sensitive and prolonged odorant signaling and calcium permeability. They are necessary and sufficient to promote functional reconstitution of odor-evoked signaling in sensory neurons that normally respond only to carbon dioxide. Involved in the behavioral responses to esters. Involved in the behavioral responses to pentyl acetate. This is Odorant receptor 47a (Or47a) from Drosophila melanogaster (Fruit fly).